Here is a 230-residue protein sequence, read N- to C-terminus: Ribose-5-phosphate isomerase A (230 aa).

Residues 31-34, 88-91, and 101-104 each bind substrate; these read TGST, DGSD, and KGGG. Glutamate 110 functions as the Proton acceptor in the catalytic mechanism. Lysine 128 provides a ligand contact to substrate.

It belongs to the ribose 5-phosphate isomerase family. As to quaternary structure, homodimer.

The catalysed reaction is aldehydo-D-ribose 5-phosphate = D-ribulose 5-phosphate. The protein operates within carbohydrate degradation; pentose phosphate pathway; D-ribose 5-phosphate from D-ribulose 5-phosphate (non-oxidative stage): step 1/1. Functionally, catalyzes the reversible conversion of ribose-5-phosphate to ribulose 5-phosphate. The protein is Ribose-5-phosphate isomerase A of Lactobacillus acidophilus (strain ATCC 700396 / NCK56 / N2 / NCFM).